Reading from the N-terminus, the 391-residue chain is Histidinol-phosphate aminotransferase (391 aa).

Residue Lys-245 is modified to N6-(pyridoxal phosphate)lysine.

This sequence belongs to the class-II pyridoxal-phosphate-dependent aminotransferase family. Histidinol-phosphate aminotransferase subfamily. As to quaternary structure, homodimer. Pyridoxal 5'-phosphate serves as cofactor.

It catalyses the reaction L-histidinol phosphate + 2-oxoglutarate = 3-(imidazol-4-yl)-2-oxopropyl phosphate + L-glutamate. The protein operates within amino-acid biosynthesis; L-histidine biosynthesis; L-histidine from 5-phospho-alpha-D-ribose 1-diphosphate: step 7/9. This is Histidinol-phosphate aminotransferase from Bifidobacterium adolescentis (strain ATCC 15703 / DSM 20083 / NCTC 11814 / E194a).